The chain runs to 87 residues: UPF0250 protein Ent638_1166 (87 aa).

This sequence belongs to the UPF0250 family.

This Enterobacter sp. (strain 638) protein is UPF0250 protein Ent638_1166.